The following is a 146-amino-acid chain: Oleosin (146 aa).

An N-acetylalanine modification is found at alanine 2. 3 helical membrane passes run 22–42 (ILGFITLFVSGAILLLLTGLT), 56–76 (VLIFFSPILIPVATVLFVAVA), and 77–97 (GFLSAGGFGLAALSAISWLYN). The Proline-knot motif lies at 55–66 (PVLIFFSPILIP).

Belongs to the oleosin family. In terms of tissue distribution, expressed in pollen (at protein level).

It is found in the lipid droplet. The protein resides in the membrane. The chain is Oleosin from Pinus elliottii (Slash pine).